The primary structure comprises 281 residues: Para-Rep C9 (281 aa).

One can recognise a CRESS-DNA virus Rep endonuclease domain in the interval 1–95 (MSAVNWVFTL…VAGPWSYGEL (95 aa)). The RCR-1 signature appears at 7–10 (VFTL). A divalent metal cation is bound by residues glutamate 33 and histidine 39. Residues 39–41 (HIQ) carry the RCR-2 motif. Residues 48–69 (KKAKMNTVKNIIGGNPHLEKMK) carry the Nuclear localization signal motif. Residue tyrosine 78 is the For DNA cleavage activity of the active site. An RCR-3 motif is present at residues 78–81 (YAQK). Position 83 (glutamate 83) interacts with a divalent metal cation. The Nuclear localization signal motif lies at 95 to 101 (LLKKGSH). Residue 178-180 (GKS) participates in ATP binding.

It belongs to the nanoviridea/circoviridae replication-associated protein family. As to quaternary structure, homooligomer (Potential). Rep binds to repeated DNA motifs (iterons). Mg(2+) serves as cofactor. Mn(2+) is required as a cofactor.

The protein resides in the host nucleus. It carries out the reaction ATP + H2O = ADP + phosphate + H(+). Functionally, initiates and terminates the replication only of its own subviral DNA molecule. The closed circular ssDNA genome is first converted to a superhelical dsDNA. Rep binds a specific hairpin at the genome origin of replication. Introduces an endonucleolytic nick within the intergenic region of the genome, thereby initiating the rolling circle replication (RCR). Following cleavage, binds covalently to the 5'-phosphate of DNA as a tyrosyl ester. The cleavage gives rise to a free 3'-OH that serves as a primer for the cellular DNA polymerase. The polymerase synthesizes the (+) strand DNA by rolling circle mechanism. After one round of replication, a Rep-catalyzed nucleotidyl transfer reaction releases a circular single-stranded virus genome, thereby terminating the replication. Displays origin-specific DNA cleavage, nucleotidyl transferase, ATPase and helicase activities. This chain is Para-Rep C9 (C9), found in Faba bean necrotic yellows C9 alphasatellite (FBNYC9A).